A 117-amino-acid chain; its full sequence is Large ribosomal subunit protein uL18 (117 aa).

This sequence belongs to the universal ribosomal protein uL18 family. As to quaternary structure, part of the 50S ribosomal subunit; part of the 5S rRNA/L5/L18/L25 subcomplex. Contacts the 5S and 23S rRNAs.

Its function is as follows. This is one of the proteins that bind and probably mediate the attachment of the 5S RNA into the large ribosomal subunit, where it forms part of the central protuberance. In Sodalis glossinidius (strain morsitans), this protein is Large ribosomal subunit protein uL18.